Reading from the N-terminus, the 212-residue chain is CRIB domain-containing protein RIC6 (212 aa).

One can recognise a CRIB domain in the interval 34–47 (IGNPTDVKHVAHIG). The disordered stretch occupies residues 51 to 212 (PSANATAPSW…MPQFDNRDDF (162 aa)). Positions 53-65 (ANATAPSWMTEFN) are enriched in polar residues. Residues 106–121 (AASEKGSPTKDKSSDK) show a composition bias toward basic and acidic residues. Polar residues predominate over residues 192-202 (EYMSETGSVRS).

In terms of assembly, interacts with ARAC11/ROP1. As to expression, expressed in flowers and pollen.

The protein resides in the cell membrane. In terms of biological role, functions as a downstream effector of Rho-related GTP binding proteins of the 'Rho of Plants' (ROPs) family. Participates in the propagation of ROP GTPase signals in specific cellular responses. Is involved in pollen tube growth regulation through its interaction with ARAC11/ROP1. This Arabidopsis thaliana (Mouse-ear cress) protein is CRIB domain-containing protein RIC6 (RIC6).